The primary structure comprises 233 residues: MIELKHVTFGYNKKQMVLQDINITIPDGENVGILGESGCGKSTLASLVLGLFKPVKGEIYLSDNAVLPIFQHPLTSFNPDWTIETSLKEALYYYRGLTDNTAQDQLLIQHLSTFELNAQLLTKLPSEVSGGELQRFNVMRSLLAQPRVLICDEITSNLDVIAEQNVINILKAQTITNLNHFIVISHDLSVLQRLVNRIIVLKDGMIVDDFTIEELFNVDRHSYTKELVQAFSY.

The region spanning Ile-2 to Val-228 is the ABC transporter domain. Gly-35–Ser-42 is an ATP binding site.

The protein belongs to the ABC transporter superfamily. As to quaternary structure, the complex is composed of two ATP-binding proteins (NikD and NikE), two transmembrane proteins (NikB and NikC) and a solute-binding protein (NikA).

The protein localises to the cell membrane. The enzyme catalyses Ni(2+)(out) + ATP + H2O = Ni(2+)(in) + ADP + phosphate + H(+). Its function is as follows. Part of the ABC transporter complex NikABCDE (Opp2) involved in nickel import. Probably responsible for energy coupling to the transport system. The polypeptide is Nickel import system ATP-binding protein NikE (Staphylococcus aureus (strain bovine RF122 / ET3-1)).